The chain runs to 273 residues: uncharacterized protein (273 aa).

A signal peptide spans 1-21 (MKILRWLFALVMLIATTEAMA).

The protein to S.typhimurium YadU.

Functionally, part of the yfcOPQRSUV fimbrial operon. Could contribute to adhesion to various surfaces in specific environmental niches. Increases adhesion to eukaryotic T24 bladder epithelial cells in the absence of fim genes. This is an uncharacterized protein from Escherichia coli (strain K12).